Here is a 151-residue protein sequence, read N- to C-terminus: Myosin light polypeptide 6 (151 aa).

Position 2 is an N-acetylcysteine (cysteine 2). EF-hand domains are found at residues 7–42 (EQTA…LGQN), 84–119 (GCFE…LGEK), and 119–151 (KMTE…VLSG).

As to quaternary structure, myosin is a hexamer of 2 heavy chains and 4 light chains.

Its function is as follows. Regulatory light chain of myosin. Does not bind calcium. The sequence is that of Myosin light polypeptide 6 (MYL6) from Gallus gallus (Chicken).